Consider the following 200-residue polypeptide: Large ribosomal subunit protein uL4 (200 aa).

The disordered stretch occupies residues 38 to 72 (GRQGTKQQKTRSDVAGGGKRPWRQKGTGRARAGTT).

The protein belongs to the universal ribosomal protein uL4 family. Part of the 50S ribosomal subunit.

One of the primary rRNA binding proteins, this protein initially binds near the 5'-end of the 23S rRNA. It is important during the early stages of 50S assembly. It makes multiple contacts with different domains of the 23S rRNA in the assembled 50S subunit and ribosome. Its function is as follows. Forms part of the polypeptide exit tunnel. The protein is Large ribosomal subunit protein uL4 of Pseudomonas entomophila (strain L48).